Here is a 380-residue protein sequence, read N- to C-terminus: Outer membrane protein assembly factor BamB (380 aa).

An N-terminal signal peptide occupies residues 1 to 18 (MVQWKHAALLALALAVVG). A lipid anchor (N-palmitoyl cysteine) is attached at C19. C19 carries the S-diacylglycerol cysteine lipid modification.

Belongs to the BamB family. Part of the Bam complex.

Its subcellular location is the cell outer membrane. Its function is as follows. Part of the outer membrane protein assembly complex, which is involved in assembly and insertion of beta-barrel proteins into the outer membrane. This is Outer membrane protein assembly factor BamB from Pseudomonas aeruginosa (strain ATCC 15692 / DSM 22644 / CIP 104116 / JCM 14847 / LMG 12228 / 1C / PRS 101 / PAO1).